Consider the following 336-residue polypeptide: Syntaxin-31 (336 aa).

Residues 1-314 (MGSTFRDRTV…QHLTRISSNR (314 aa)) lie on the Cytoplasmic side of the membrane. Disordered stretches follow at residues 23–53 (GAIP…KASR) and 152–218 (RSEN…SQLR). The span at 154 to 163 (ENMKAHENRK) shows a compositional bias: basic and acidic residues. The segment covering 164–181 (QLFSTKNAVDSPPQNNAK) has biased composition (polar residues). The span at 190–202 (SSSSNPFGNLQQP) shows a compositional bias: low complexity. Residues 244–306 (ENYSQSRAVA…EGARSALLQH (63 aa)) enclose the t-SNARE coiled-coil homology domain. Residues 315–335 (WLMMKIFAVIILFLIVFLFFV) form a helical; Anchor for type IV membrane protein membrane-spanning segment. Position 336 (alanine 336) is a topological domain, vesicular.

Belongs to the syntaxin family. In terms of assembly, part of the t-SNARE complex. Interacts with CDC48A, but not with VPS45.

The protein localises to the golgi apparatus. The protein resides in the cis-Golgi network membrane. Its subcellular location is the cytoplasm. It localises to the endosome. Its function is as follows. Vesicle trafficking protein that functions in the secretory pathway. The polypeptide is Syntaxin-31 (SYP31) (Arabidopsis thaliana (Mouse-ear cress)).